A 179-amino-acid chain; its full sequence is Large ribosomal subunit protein uL5 (179 aa).

The protein belongs to the universal ribosomal protein uL5 family. As to quaternary structure, part of the 50S ribosomal subunit; part of the 5S rRNA/L5/L18/L25 subcomplex. Contacts the 5S rRNA and the P site tRNA. Forms a bridge to the 30S subunit in the 70S ribosome.

In terms of biological role, this is one of the proteins that bind and probably mediate the attachment of the 5S RNA into the large ribosomal subunit, where it forms part of the central protuberance. In the 70S ribosome it contacts protein S13 of the 30S subunit (bridge B1b), connecting the 2 subunits; this bridge is implicated in subunit movement. Contacts the P site tRNA; the 5S rRNA and some of its associated proteins might help stabilize positioning of ribosome-bound tRNAs. The polypeptide is Large ribosomal subunit protein uL5 (Neisseria gonorrhoeae (strain ATCC 700825 / FA 1090)).